Consider the following 511-residue polypeptide: V-type proton ATPase subunit B, brain isoform (511 aa).

Position 400 (arginine 400) interacts with ATP.

This sequence belongs to the ATPase alpha/beta chains family. As to quaternary structure, V-ATPase is a heteromultimeric enzyme made up of two complexes: the ATP-hydrolytic V1 complex and the proton translocation V0 complex. The V1 complex consists of three catalytic AB heterodimers that form a heterohexamer, three peripheral stalks each consisting of EG heterodimers, one central rotor including subunits D and F, and the regulatory subunits C and H. The proton translocation complex V0 consists of the proton transport subunit a, a ring of proteolipid subunits c9c'', rotary subunit d, subunits e and f, and the accessory subunits ATP6AP1/Ac45 and ATP6AP2/PRR. In terms of tissue distribution, kidney; found in early distal nephron, encompassing thick ascending limbs and distal convoluted tubules and in the alpha-intercalated cells of the cortical collecting ducts (at protein level). Expressed in epididymal clear cells (at protein level). Mainly expressed in the organ of Corti and spiral ganglion neurons, in both the early postnatal cochlea (P2) and the adult cochlea (P30).

It localises to the apical cell membrane. The protein localises to the melanosome. It is found in the cytoplasm. Its subcellular location is the cytoplasmic vesicle. The protein resides in the secretory vesicle. It localises to the synaptic vesicle membrane. The protein localises to the clathrin-coated vesicle membrane. Non-catalytic subunit of the V1 complex of vacuolar(H+)-ATPase (V-ATPase), a multisubunit enzyme composed of a peripheral complex (V1) that hydrolyzes ATP and a membrane integral complex (V0) that translocates protons. V-ATPase is responsible for acidifying and maintaining the pH of intracellular compartments and in some cell types, is targeted to the plasma membrane, where it is responsible for acidifying the extracellular environment. In renal intercalated cells, can partially compensate the lack of ATP6V1B1 and mediate secretion of protons (H+) into the urine under base-line conditions but not in conditions of acid load. The chain is V-type proton ATPase subunit B, brain isoform (Atp6v1b2) from Mus musculus (Mouse).